A 184-amino-acid chain; its full sequence is Probable sensory rhodopsin transducer (184 aa).

Helical transmembrane passes span 14–34 and 52–72; these read TLGVGAVLVLVLATLAVVNVY and GLVSILLIVAVALLFVATIIG. Positions 73-125 constitute an HAMP domain; it reads RERTAAVETLAAQARQIEQGELDVDLATNRTDDVGDIYRALAVLRDSEQLDRQ.

The protein belongs to the methyl-accepting chemotaxis (MCP) protein family. As to quaternary structure, interacts with Xop2/SRM.

The protein localises to the membrane. Functionally, the HtrM-Xop2/SRM complex may interact with CheB or CheR and modulate their availability to Sop1 or Sop2. The protein is Probable sensory rhodopsin transducer (htrM) of Haloarcula marismortui (strain ATCC 43049 / DSM 3752 / JCM 8966 / VKM B-1809) (Halobacterium marismortui).